The primary structure comprises 763 residues: Sphingoid long-chain bases kinase 1 (763 aa).

Positions 34-81 are disordered; that stretch reads TGGSQQSSPIVFPEKRNKKVKASSRRGEVTNDPQVKPKPDEHRIDIGG. Positions 58-81 are enriched in basic and acidic residues; sequence RRGEVTNDPQVKPKPDEHRIDIGG. The DAGKc domain occupies 245 to 384; the sequence is KSAPKMLVIL…TDVFAVEWIH (140 aa). ATP-binding positions include 255 to 257 and Thr-287; that span reads NPR. 313–316 contacts substrate; sequence GGDG. Residue Asp-315 is the Proton donor/acceptor of the active site. Residues Glu-320, 345-347, and Arg-418 contribute to the ATP site; that span reads GSD. The interval 561–603 is disordered; sequence MGLTSVQDPPTRCSWGNTGGQDREDISSTVSDPGPIWDAGPKW. An ATP-binding site is contributed by 733–735; it reads DGE.

As to expression, expressed in roots, stems, leaves and at higher levels in flowers.

Involved in the production of sphingolipid metabolites. Active on sphingosine, phytosphingosine (PHS, 4-hydroxysphinganine), D-erythro-dihydrosphingosine, D-erythro-sphingosine and trans-4, trans-8-sphingadienine, an LCB found exclusively in plants, but not on N-acetyl-dihydrosphingosine (C2-dihydroceramide) and D-threo-dihydrosphingosine. The polypeptide is Sphingoid long-chain bases kinase 1 (LCBK1) (Arabidopsis thaliana (Mouse-ear cress)).